Reading from the N-terminus, the 236-residue chain is C-&gt;U-editing enzyme APOBEC-1 (236 aa).

Residues G10 to L134 form the CMP/dCMP-type deaminase domain. H61 contacts Zn(2+). E63 acts as the Proton donor in catalysis. Residues C93 and C96 each contribute to the Zn(2+) site.

It belongs to the cytidine and deoxycytidylate deaminase family. In terms of assembly, homodimer. Interacts with A1CF; form an mRNA editing complex. Interacts with RBM47; form an mRNA editing complex. Found in a complex with CELF2/CUGBP2 and A1CF. Interacts with HNRPAB. Interacts with SYNCRIP. Zn(2+) serves as cofactor.

The protein resides in the cytoplasm. The protein localises to the nucleus. It carries out the reaction a cytidine in mRNA + H2O + H(+) = a uridine in mRNA + NH4(+). The enzyme catalyses cytidine(6666) in apoB mRNA + H2O + H(+) = uridine(6666) in apoB mRNA + NH4(+). Its function is as follows. Cytidine deaminase catalyzing the cytidine to uridine postranscriptional editing of a variety of mRNAs. Form complexes with cofactors that confer differential editing activity and selectivity. Responsible for the postranscriptional editing of a CAA codon for Gln to a UAA codon for stop in the apolipoprotein B mRNA. Also involved in CGA (Arg) to UGA (Stop) editing in the NF1 mRNA. May also play a role in the epigenetic regulation of gene expression by participating in DNA demethylation. The sequence is that of C-&gt;U-editing enzyme APOBEC-1 from Pongo pygmaeus (Bornean orangutan).